The chain runs to 115 residues: Large ribosomal subunit protein bL19 (115 aa).

It belongs to the bacterial ribosomal protein bL19 family.

In terms of biological role, this protein is located at the 30S-50S ribosomal subunit interface and may play a role in the structure and function of the aminoacyl-tRNA binding site. The polypeptide is Large ribosomal subunit protein bL19 (Klebsiella pneumoniae (strain 342)).